The following is a 260-amino-acid chain: NAD kinase (260 aa).

The active-site Proton acceptor is the aspartate 54. NAD(+) is bound by residues 54-55, 123-124, arginine 150, aspartate 152, and 163-168; these read DG, ND, and TAYSLS.

It belongs to the NAD kinase family. Requires a divalent metal cation as cofactor.

It localises to the cytoplasm. The catalysed reaction is NAD(+) + ATP = ADP + NADP(+) + H(+). In terms of biological role, involved in the regulation of the intracellular balance of NAD and NADP, and is a key enzyme in the biosynthesis of NADP. Catalyzes specifically the phosphorylation on 2'-hydroxyl of the adenosine moiety of NAD to yield NADP. This chain is NAD kinase, found in Caldicellulosiruptor saccharolyticus (strain ATCC 43494 / DSM 8903 / Tp8T 6331).